The primary structure comprises 382 residues: Chaperone protein DnaJ (382 aa).

The region spanning 5 to 69 is the J domain; sequence DLYGVLGVAK…QKRANYDQSG (65 aa). Positions 104-123 are disordered; it reads QFFGGGGGQRNPNAPRPGRD. Residues 138 to 220 form a CR-type zinc finger; that stretch reads GKKTKIKYNR…CGGSGHEEER (83 aa). Zn(2+) is bound by residues C151, C154, C168, C171, C194, C197, C208, and C211. CXXCXGXG motif repeat units lie at residues 151–158, 168–175, 194–201, and 208–215; these read CHTCGGNG, CHQCGGSG, CPVCHGTG, and CPTCGGSG. A disordered region spans residues 358–382; sequence ASGESVTGSGKGNLFNKMRDKFNEN.

It belongs to the DnaJ family. Homodimer. Zn(2+) serves as cofactor.

The protein resides in the cytoplasm. Participates actively in the response to hyperosmotic and heat shock by preventing the aggregation of stress-denatured proteins and by disaggregating proteins, also in an autonomous, DnaK-independent fashion. Unfolded proteins bind initially to DnaJ; upon interaction with the DnaJ-bound protein, DnaK hydrolyzes its bound ATP, resulting in the formation of a stable complex. GrpE releases ADP from DnaK; ATP binding to DnaK triggers the release of the substrate protein, thus completing the reaction cycle. Several rounds of ATP-dependent interactions between DnaJ, DnaK and GrpE are required for fully efficient folding. Also involved, together with DnaK and GrpE, in the DNA replication of plasmids through activation of initiation proteins. The polypeptide is Chaperone protein DnaJ (Levilactobacillus brevis (strain ATCC 367 / BCRC 12310 / CIP 105137 / JCM 1170 / LMG 11437 / NCIMB 947 / NCTC 947) (Lactobacillus brevis)).